The following is a 101-amino-acid chain: DNA-directed RNA polymerase subunit omega (101 aa).

The segment covering 1-13 (MSSTPAAASATPS) has biased composition (low complexity). Positions 1–22 (MSSTPAAASATPSHGALPAYDT) are disordered.

Belongs to the RNA polymerase subunit omega family. As to quaternary structure, the RNAP catalytic core consists of 2 alpha, 1 beta, 1 beta' and 1 omega subunit. When a sigma factor is associated with the core the holoenzyme is formed, which can initiate transcription.

It carries out the reaction RNA(n) + a ribonucleoside 5'-triphosphate = RNA(n+1) + diphosphate. Promotes RNA polymerase assembly. Latches the N- and C-terminal regions of the beta' subunit thereby facilitating its interaction with the beta and alpha subunits. The protein is DNA-directed RNA polymerase subunit omega of Rhodococcus jostii (strain RHA1).